The sequence spans 802 residues: LPS-assembly protein LptD (802 aa).

The first 29 residues, 1-29 (MARLFSLKPLVLALGFCFGTHCAAADAVA), serve as a signal peptide directing secretion.

The protein belongs to the LptD family. Component of the lipopolysaccharide transport and assembly complex. Interacts with LptE and LptA.

Its subcellular location is the cell outer membrane. Together with LptE, is involved in the assembly of lipopolysaccharide (LPS) at the surface of the outer membrane. This is LPS-assembly protein LptD from Neisseria meningitidis serogroup A / serotype 4A (strain DSM 15465 / Z2491).